A 44-amino-acid polypeptide reads, in one-letter code: uncharacterized protein (44 aa).

This is an uncharacterized protein from Bacillus subtilis (Bacteriophage phi-105).